The following is a 716-amino-acid chain: Cyclic nucleotide-gated ion channel 1 (716 aa).

Residues 1-97 (MNFRQEKFVR…QGPFLQRWNK (97 aa)) lie on the Cytoplasmic side of the membrane. The chain crosses the membrane as a helical span at residues 98 to 118 (IFVLACIIAVSLDPLFFYVPI). At 119–132 (IDDAKKCLGIDKKM) the chain is on the extracellular side. The chain crosses the membrane as a helical span at residues 133–153 (EITASVLRSFTDVFYVLHIIF). The Cytoplasmic segment spans residues 154 to 187 (QFRTGFIAPSSRVFGRGVLVEDKREIAKRYLSSH). The helical transmembrane segment at 188–208 (FIIDILAVLPLPQMVILIIIP) threads the bilayer. Residues 209-220 (HMRGSSSLNTKN) lie on the Extracellular side of the membrane. A helical transmembrane segment spans residues 221–241 (MLKFIVFFQYIPRFIRIYPLY). At 242–259 (KEVTRTSGILTETAWAGA) the chain is on the cytoplasmic side. The helical transmembrane segment at 260 to 280 (AFNLFLYMLASHVFGAFWYLF) threads the bilayer. The Extracellular portion of the chain corresponds to 281–379 (SIERETVCWK…GQNLKTSTYI (99 aa)). The helical transmembrane segment at 380–400 (WEICFAVFISIAGLVLFSFLI) threads the bilayer. The Cytoplasmic segment spans residues 401 to 716 (GNMQTYLQST…PAEPDFNSDD (316 aa)). A nucleoside 3',5'-cyclic phosphate-binding positions include 486–610 (MFEK…SKQL) and glutamate 557. Residues 602 to 617 (FRRLHSKQLRHTFRYY) form a calmodulin-binding region. The IQ domain maps to 622–651 (KTWAACFIQAAWRRYIKKKLEESLKEEENR). The disordered stretch occupies residues 689-716 (SVRKPRMPERMPPMLLQKPAEPDFNSDD).

The protein belongs to the cyclic nucleotide-gated cation channel (TC 1.A.1.5) family. As to quaternary structure, homotetramer or heterotetramer (Potential). Binds calmodulin-2/3/5 with a higher affinity than calmodulin-1/4. As to expression, expressed in the whole plant but only weakly in roots.

The protein localises to the cell membrane. Its function is as follows. Acts as a cyclic nucleotide-gated ion channel. Can be activated by cyclic AMP which leads to an opening of the cation channel. May be responsible for cAMP-induced calcium entry in cells and thus should be involved in the calcium signal transduction. Could transport K(+), Na(+) and Pb(2+). The polypeptide is Cyclic nucleotide-gated ion channel 1 (CNGC1) (Arabidopsis thaliana (Mouse-ear cress)).